We begin with the raw amino-acid sequence, 249 residues long: NADH dehydrogenase [ubiquinone] flavoprotein 2, mitochondrial (249 aa).

A mitochondrion-targeting transit peptide spans 1–32; it reads MFFSAALRARAAGLTAHWGRHVRNLHKTAKQN. K61 carries the N6-acetyllysine modification. 4 residues coordinate [2Fe-2S] cluster: C135, C140, C176, and C180. Y193 carries the phosphotyrosine; by SRC modification. The disordered stretch occupies residues 213–249; it reads IPKPGPRSGRFSCEPAGGLTSLTEPPKGPGFGVQAGL.

The protein belongs to the complex I 24 kDa subunit family. In terms of assembly, core subunit of respiratory chain NADH dehydrogenase (Complex I) which is composed of 45 different subunits. This is a component of the flavoprotein-sulfur (FP) fragment of the enzyme. It depends on [2Fe-2S] cluster as a cofactor.

It is found in the mitochondrion inner membrane. The enzyme catalyses a ubiquinone + NADH + 5 H(+)(in) = a ubiquinol + NAD(+) + 4 H(+)(out). Functionally, core subunit of the mitochondrial membrane respiratory chain NADH dehydrogenase (Complex I) which catalyzes electron transfer from NADH through the respiratory chain, using ubiquinone as an electron acceptor. Parts of the peripheral arm of the enzyme, where the electrons from NADH are accepted by flavin mononucleotide (FMN) and then passed along a chain of iron-sulfur clusters by electron tunnelling to the final acceptor ubiquinone. Contains one iron-sulfur cluster. This Pan troglodytes (Chimpanzee) protein is NADH dehydrogenase [ubiquinone] flavoprotein 2, mitochondrial.